Here is a 64-residue protein sequence, read N- to C-terminus: Conotoxin Pu3.4 (64 aa).

The first 16 residues, 1-16, serve as a signal peptide directing secretion; it reads LGVLLPICLLLFPLTA. Positions 17 to 49 are excised as a propeptide; sequence LPLDGDQPADRPAERMQDDFITEQHPLFDPVKR. Cystine bridges form between cysteine 50–cysteine 63, cysteine 51–cysteine 59, and cysteine 55–cysteine 62. Proline 61 carries the 4-hydroxyproline modification.

It belongs to the conotoxin M superfamily. Expressed by the venom duct.

It is found in the secreted. This is Conotoxin Pu3.4 from Conus pulicarius (Flea-bitten cone).